The primary structure comprises 357 residues: Guanine nucleotide-binding protein alpha-2 subunit (357 aa).

Gly-2 carries N-myristoyl glycine lipidation. Cys-4 carries S-palmitoyl cysteine lipidation. The 327-residue stretch at 30-356 folds into the G-alpha domain; sequence NEVKLLLLGA…TQCVMKAGLY (327 aa). Residues 33 to 46 are G1 motif; that stretch reads KLLLLGAGESGKST. 6 residues coordinate GTP: Glu-41, Ser-42, Gly-43, Lys-44, Ser-45, and Thr-46. Ser-45 contributes to the Mg(2+) binding site. Ser-113 carries the post-translational modification Phosphoserine. GTP is bound by residues Asp-154, Leu-179, Thr-185, Gly-207, Asn-272, Lys-273, Asp-275, and Ala-328. The G2 motif stretch occupies residues 177-185; that stretch reads DILHTRVMT. Mg(2+) is bound at residue Thr-185. Residues 200–209 are G3 motif; that stretch reads FRLVDVGGQR. The interval 268–275 is G4 motif; that stretch reads ILFLNKSD. The tract at residues 326-331 is G5 motif; it reads TCATDT.

Belongs to the G-alpha family. G proteins are composed of 3 units; alpha, beta and gamma. The alpha chain contains the guanine nucleotide binding site. Interacts with the RAP guanine nucleotide exchange factor glfB. Mg(2+) serves as cofactor. In terms of processing, ser-113 is transiently phosphorylated following stimulation with extracellular cAMP.

Guanine nucleotide-binding proteins (G proteins) are involved as modulators or transducers in various transmembrane signaling systems. G alpha-2 is required for the early aggregation process and most of the known cAMP receptor-mediated responses. Interacts with downstream effector gflB, a Rap guanine nucleotide exchange factor, to regulate the balance between Ras and Rap signaling at the leading edge of chemotaxing cells. The chain is Guanine nucleotide-binding protein alpha-2 subunit (gpaB) from Dictyostelium discoideum (Social amoeba).